The primary structure comprises 489 residues: MDLESESSALESVDDNVLIQQSASNVCDDGRSLDNGSCSDESVKLLSTSNSVELGKPMSFDSPGDGGGAYSPVLKGQGLRKWRRIRRDLVKDTSANMENSKALKRGLSGVAHSHGKQMQFQSPEVEQESQGSVGSVNMLKSSGDGFDILGSSGYDSRFVAGVGFSAGMDLEIDDDRSSKSSTVARAPKVIRYEKPMISSGQGGNIRVENSKKHRGESVDFEKENSYSSLESDSRKQSGRMMDYNGENGETSMRKDDAGGEGGESINTDNRYSDEMDPLTEAINGFLALQDALEKEVQQFQEIGNEPMPQHHEQVSEANSPHPEIVTLVNNVEQLENMLEETRSMLEVKESHIRDLESTTNQSKHSWGGTEIVVEDIFRQKIEAEIEYLIYSRSIDNLNSQMKLIDEQESLAEEQTHETLNKLGRVQTKAANFTNRAQDLQNDCIEITGTIKKRACKITSYVLIQLVLLSTVVLLLLSQLLPEPDTVVPT.

Positions 49–73 are disordered; the sequence is SNSVELGKPMSFDSPGDGGGAYSPV. 3 consecutive short sequence motifs (nuclear localization signal) follow at residues 80–81, 83–84, and 104–105; these read RK, RR, and KR. The interval 195 to 264 is disordered; the sequence is PMISSGQGGN…DDAGGEGGES (70 aa). Residues 215-224 are compositionally biased toward basic and acidic residues; sequence GESVDFEKEN. Residues 323 to 446 adopt a coiled-coil conformation; it reads EIVTLVNNVE…QDLQNDCIEI (124 aa). The 31-residue stretch at 459–489 folds into the KASH domain; the sequence is SYVLIQLVLLSTVVLLLLSQLLPEPDTVVPT. A helical transmembrane segment spans residues 460–480; the sequence is YVLIQLVLLSTVVLLLLSQLL.

As to quaternary structure, homodimer and heterodimer with WIP2. Component of Ran complexes at least composed of WIT1 or WIT2, RANGAP1 or RANGAP2, and WIP1 or WIP2 or WIP3. Interacts with RANGAP1, RANGAP2, WPP1/MAF1, and WPP2/MAF2. Interacts with SUN1 and SUN2. Interacts with KIN1. Core component of the LINC complex which is composed of inner nuclear membrane SUN domain-containing proteins coupled to outer nuclear membrane WIP and WIT proteins. The LINC complex also involves nucleoskeletal proteins CRWN/LINC and possibly KAKU4 and the cytoskeletal myosin KAKU1. Interacts with WIT1 and SUN2. Interacts with WIT2. Interacts with SUN3. As to expression, expressed in seedlings, roots, stems, leaves, and flowers.

It is found in the nucleus envelope. The protein localises to the nucleus membrane. Functionally, mediates and enhances the nuclear envelope docking of RANGAP proteins mediated by WIT1 and WIT2 in the undifferentiated cells of root tips. As component of the SUN-WIP-WIT2-KAKU1 complex, mediates the transfer of cytoplasmic forces to the nuclear envelope (NE), leading to nuclear shape changes. The protein is WPP domain-interacting protein 1 (WIP1) of Arabidopsis thaliana (Mouse-ear cress).